An 87-amino-acid chain; its full sequence is Homeotic protein ultrabithorax (87 aa).

Positions 22–27 (FYPWMA) match the Antp-type hexapeptide motif.

It belongs to the Antp homeobox family. In terms of tissue distribution, in the embryo, expression is seen in the epidermis, somatic and visceral mesoderm, and the peripheral and central nervous system.

It is found in the nucleus. Functionally, sequence-specific transcription factor which is part of a developmental regulatory system that provides cells with specific positional identities on the anterior-posterior axis. Binds the consensus region 5'-TTAAT[GT][GA]-3'. This homeotic protein controls development of the cells in the posterior thoracic and first abdominal segments. It activates the synthesis of the decapentaplegic (DPP) growth factor. This is Homeotic protein ultrabithorax (Ubx) from Drosophila hydei (Fruit fly).